The chain runs to 437 residues: GTPase Der (437 aa).

EngA-type G domains lie at 3-168 (PLIA…PETE) and 178-353 (IQLA…QNRS). GTP contacts are provided by residues 9 to 16 (GRPNVGKS), 56 to 60 (DTGGY), 120 to 123 (NKVE), 184 to 191 (GRPNVGKS), 231 to 235 (DTAGL), and 296 to 299 (NKWD). Residues 354–437 (RKISTSVLNK…VPISMRFMQK (84 aa)) enclose the KH-like domain.

It belongs to the TRAFAC class TrmE-Era-EngA-EngB-Septin-like GTPase superfamily. EngA (Der) GTPase family. As to quaternary structure, associates with the 50S ribosomal subunit.

Functionally, GTPase that plays an essential role in the late steps of ribosome biogenesis. This is GTPase Der from Pelodictyon phaeoclathratiforme (strain DSM 5477 / BU-1).